Reading from the N-terminus, the 395-residue chain is Putative pyridoxal phosphate-dependent acyltransferase (395 aa).

Position 110-111 (110-111) interacts with pyridoxal 5'-phosphate; it reads GF. His135 lines the substrate pocket. Pyridoxal 5'-phosphate-binding positions include Ser185, 210–213, and 240–243; these read DDAH and TLSK. At Lys243 the chain carries N6-(pyridoxal phosphate)lysine. Thr357 lines the substrate pocket.

Belongs to the class-II pyridoxal-phosphate-dependent aminotransferase family. Homodimer. Pyridoxal 5'-phosphate is required as a cofactor.

In Staphylococcus aureus (strain COL), this protein is Putative pyridoxal phosphate-dependent acyltransferase.